We begin with the raw amino-acid sequence, 143 residues long: Mediator of RNA polymerase II transcription subunit 10 (143 aa).

Residues 123-143 (GAHSNTEISTNPGQKRQGNVS) form a disordered region. Residues 124-143 (AHSNTEISTNPGQKRQGNVS) show a composition bias toward polar residues.

The protein belongs to the Mediator complex subunit 10 family. Component of the Mediator complex.

The protein localises to the nucleus. Component of the Mediator complex, a coactivator involved in the regulated transcription of nearly all RNA polymerase II-dependent genes. Mediator functions as a bridge to convey information from gene-specific regulatory proteins to the basal RNA polymerase II transcription machinery. Mediator is recruited to promoters by direct interactions with regulatory proteins and serves as a scaffold for the assembly of a functional preinitiation complex with RNA polymerase II and the general transcription factors. This Yarrowia lipolytica (strain CLIB 122 / E 150) (Yeast) protein is Mediator of RNA polymerase II transcription subunit 10 (NUT2).